A 220-amino-acid polypeptide reads, in one-letter code: Inner kinetochore subunit fta3 (220 aa).

It belongs to the CENP-H/MCM16 family. Component of the inner kinetochore constitutive centromere-associated network (CCAN) (also known as central kinetochore Sim4 complex in fission yeast), which is composed of at least cnl2, cnp3, cnp20, fta1, fta2, fta3, fta4, fta6, fta7, mal2, mhf1, mhf2, mis6, mis15, mis17, sim4 and wip1.

It localises to the nucleus. The protein resides in the chromosome. It is found in the centromere. The protein localises to the kinetochore. Component of the kinetochore, a multiprotein complex that assembles on centromeric DNA and attaches chromosomes to spindle microtubules, mediating chromosome segregation and sister chromatid segregation during meiosis and mitosis. Component of the inner kinetochore constitutive centromere-associated network (CCAN), which serves as a structural platform for outer kinetochore assembly. Fta2, fta3 and fta4 associate with the central core (cnt) and inner repeat (inr) region of the centromere. In Schizosaccharomyces pombe (strain 972 / ATCC 24843) (Fission yeast), this protein is Inner kinetochore subunit fta3 (fta3).